The primary structure comprises 215 residues: Glycerol-3-phosphate acyltransferase (215 aa).

A run of 5 helical transmembrane segments spans residues 14 to 34, 63 to 83, 92 to 112, 128 to 148, and 154 to 174; these read SSSA…AVVV, TAAA…LWLA, WGAY…PLFL, MAIE…VAVF, and LAAL…SGAA.

Belongs to the PlsY family. As to quaternary structure, probably interacts with PlsX.

The protein localises to the cell inner membrane. It catalyses the reaction an acyl phosphate + sn-glycerol 3-phosphate = a 1-acyl-sn-glycero-3-phosphate + phosphate. The protein operates within lipid metabolism; phospholipid metabolism. Catalyzes the transfer of an acyl group from acyl-phosphate (acyl-PO(4)) to glycerol-3-phosphate (G3P) to form lysophosphatidic acid (LPA). This enzyme utilizes acyl-phosphate as fatty acyl donor, but not acyl-CoA or acyl-ACP. This is Glycerol-3-phosphate acyltransferase from Bordetella bronchiseptica (strain ATCC BAA-588 / NCTC 13252 / RB50) (Alcaligenes bronchisepticus).